The chain runs to 221 residues: UPF0758 protein ECA0145 (221 aa).

The 123-residue stretch at 99–221 folds into the MPN domain; that stretch reads AMLNPEATGQ…FVSFAERGWI (123 aa). The Zn(2+) site is built by H170, H172, and D183. Positions 170-183 match the JAMM motif motif; it reads HNHPSGKAEPSQAD.

This sequence belongs to the UPF0758 family. YicR subfamily.

This is UPF0758 protein ECA0145 from Pectobacterium atrosepticum (strain SCRI 1043 / ATCC BAA-672) (Erwinia carotovora subsp. atroseptica).